Here is a 1392-residue protein sequence, read N- to C-terminus: DNA-directed RNA polymerase subunit beta (1392 aa).

Residues leucine 1372–glutamate 1392 form a disordered region.

This sequence belongs to the RNA polymerase beta chain family. As to quaternary structure, the RNAP catalytic core consists of 2 alpha, 1 beta, 1 beta' and 1 omega subunit. When a sigma factor is associated with the core the holoenzyme is formed, which can initiate transcription.

It carries out the reaction RNA(n) + a ribonucleoside 5'-triphosphate = RNA(n+1) + diphosphate. DNA-dependent RNA polymerase catalyzes the transcription of DNA into RNA using the four ribonucleoside triphosphates as substrates. This is DNA-directed RNA polymerase subunit beta from Sphingopyxis alaskensis (strain DSM 13593 / LMG 18877 / RB2256) (Sphingomonas alaskensis).